We begin with the raw amino-acid sequence, 90 residues long: MLKKKIIKTHANHTNDTGSTQVQVSLLSSRVAQLTKHLNNHKNDYSSQRGLKKLLGQRKRLLKYLFVKDPLGYNNLIIQLGIRPGKSLVN.

This sequence belongs to the universal ribosomal protein uS15 family. As to quaternary structure, part of the 30S ribosomal subunit.

Its subcellular location is the plastid. It localises to the chloroplast. The polypeptide is Small ribosomal subunit protein uS15c (rps15) (Mesostigma viride (Green alga)).